The chain runs to 504 residues: MEEFQRYLELDRSQQHYFLYPLIFQEYIYALAHNHGLTRSILLENSGYDNKSSLLIVKRLITRLYQQNHLIVSANDSNQNQFFGCNKNLYYQMISEGFAVILEIPFSIQLMSSLERKGIVKSHNLRSIHSIFPFLEDPFSHLNSALDILIPYPVHLEILVQTLRYRVKDVSSLHLLRLFLYEDPNSNNLITPKKAGSSFSKTNQRFFFFLYNSHVCEYESIFVFLRNQSSHLRSTSFGDLLERIYFYGKIEYLVEVLAKAFQANLWLFKDPFMHYVRYQGKSILASKGTSFLMNKWKYYFVNFWQCYFYLWSKPGRVYINQLSNHSLDLLGYLSSVRLNPSMVRSQMLEKAFIIDNAMKKFDAIVPIIPLIGSLAKAKFCNVLGHPISKAFWTDLSDSDIIDRFGRICRSLSHYHSGSSQKKSLYRIKYILRLSCARTLARKHKSTVRAFLKRLGSELLQEFFTSEEQILSLTFPRVSYTSRRLYRRRIWYLDIICINDFANHE.

The protein belongs to the intron maturase 2 family. MatK subfamily.

It localises to the plastid. Its subcellular location is the chloroplast. Functionally, usually encoded in the trnK tRNA gene intron. Probably assists in splicing its own and other chloroplast group II introns. This chain is Maturase K, found in Berzelia lanuginosa (Buttonbush).